An 809-amino-acid polypeptide reads, in one-letter code: MADDEEIDIEGDDDAPLLFDHKDDALALPDLPGYEPNWMFDHGQEIYGRSWTSISQFVQTRTPLQVKNYARHFFKTKVVQKVEEGEDEDVDIEGEESGEEAVMELRSTCGLNPAQPAVVTSDDTSTGENVMEETEAVTEDHPSLDNLVQDDREMPQQETTGDGEQYPMDEHFLPVFPWQPDDTQNRVIVERIEGSVGLGSVRGDKDVRPVPGVEQNTYGPHTDMFQVQNTLLAFEKQVGADRIFEGPSXSKNEATDTQTEVSETKTEVIERQTESQVDATHMHTYGDGLMGSIERLTESVSSSELKEDLKTGIEYVEKDDATDSSSTAKGYDNYTLDHPEDRSKPDSVVSEKWSCEEAMSSHTDGRTFSDSDSGKETYDLPRYNTTIFQGHSEDETSDAGQAEEETFFTFKKPTEEVVLDRSVITEEEKEVHKEFFDGRQTKTPERYLKIRNHLLDCWERTKPEYLRKTVARAGLRNCGDVNCIGRIHGYLERIGAINFGCEEANRGEFPVAKVGVKRNPQGHGEQLALQAARLESMHVTSDELEKQDGGVSQIRPNRSRAARTNLNSFSYDPFKLVPCKRFSEESPAPFSVKIHATALVTIDMHAHISTAEVIGLLGGVFHRDPGALEVASAEPCNSLSTGMQCEMDPVSQTQASEALSQAGYSVVGWYHSHPTFAPNPSVRDIETQTKFQEWFAQGGSPFIGIIVNPYSSTRISPLSRVTCLTISSEWNPPAIQRVKLLSRYAGHTDTTYMDKMLYSLSGHLCRGNADSDEDGNSESLTLLTDIRDIFANSWTSSLGTTPRSSIASL.

The 46-residue stretch at 33–78 folds into the SANT domain; that stretch reads GYEPNWMFDHGQEIYGRSWTSISQFVQTRTPLQVKNYARHFFKTKV. 2 disordered regions span residues 113 to 140 and 320 to 378; these read PAQP…VTED and DATD…KETY. Basic and acidic residues-rich tracts occupy residues 335–345 and 363–378; these read TLDHPEDRSKP and TDGR…KETY. The SWIRM domain occupies 410–508; that stretch reads FKKPTEEVVL…FGCEEANRGE (99 aa). One can recognise an MPN domain in the interval 592-719; it reads VKIHATALVT…YSSTRISPLS (128 aa). Histidine 671, histidine 673, and aspartate 684 together coordinate Zn(2+). Positions 671–684 match the JAMM motif motif; the sequence is HSHPTFAPNPSVRD.

Belongs to the peptidase M67A family. MYSM1 subfamily.

It localises to the nucleus. In terms of biological role, metalloprotease that specifically deubiquitinates monoubiquitinated histone H2A, a specific tag for epigenetic transcriptional repression, thereby acting as a coactivator. Preferentially deubiquitinates monoubiquitinated H2A in hyperacetylated nucleosomes. Deubiquitination of histone H2A leads to facilitate the phosphorylation and dissociation of histone H1 from the nucleosome. Acts as a coactivator by participating in the initiation and elongation steps of androgen receptor (AR)-induced gene activation. This chain is Histone H2A deubiquitinase MYSM1 (MYSM1), found in Branchiostoma floridae (Florida lancelet).